Consider the following 174-residue polypeptide: MSASETDRWAWLLVLSFVFGCNLLRILLPSLSSFISRVLQKDAEQESQMRAEIQGMKQELSTVNMMDEFARYARLERKINKMTDKLKTHVKARTAQLAKIKWFISVAFYILQAALMISLIWKYYSVPVAVVPSKWITPLDRLVAFPTRVAGGIGITCWILVCNKVVAIVLHPFS.

Residues 1-8 (MSASETDR) are Lumenal-facing. A helical transmembrane segment spans residues 9–29 (WAWLLVLSFVFGCNLLRILLP). Topologically, residues 30 to 99 (SLSSFISRVL…VKARTAQLAK (70 aa)) are cytoplasmic. Positions 39-94 (LQKDAEQESQMRAEIQGMKQELSTVNMMDEFARYARLERKINKMTDKLKTHVKART) form a coiled coil. Positions 39 to 97 (LQKDAEQESQMRAEIQGMKQELSTVNMMDEFARYARLERKINKMTDKLKTHVKARTAQL) are interaction with GET3/TRC40. The helical transmembrane segment at 100 to 120 (IKWFISVAFYILQAALMISLI) threads the bilayer. Topologically, residues 121–148 (WKYYSVPVAVVPSKWITPLDRLVAFPTR) are lumenal. A helical membrane pass occupies residues 149–169 (VAGGIGITCWILVCNKVVAIV). The Cytoplasmic segment spans residues 170-174 (LHPFS).

Belongs to the WRB/GET1 family. As to quaternary structure, component of the Golgi to ER traffic (GET) complex, which is composed of GET1, CAMLG/GET2 and GET3. Within the complex, GET1 and CAMLG form a heterotetramer which is stabilized by phosphatidylinositol binding and which binds to the GET3 homodimer. Interacts with CAMLG/GET2 (via C-terminus). GET3 shows a higher affinity for CAMLG than for GET1.

It is found in the endoplasmic reticulum membrane. Its function is as follows. Required for the post-translational delivery of tail-anchored (TA) proteins to the endoplasmic reticulum. Together with CAMLG/GET2, acts as a membrane receptor for soluble GET3/TRC40, which recognizes and selectively binds the transmembrane domain of TA proteins in the cytosol. Required to ensure correct topology and ER insertion of CAMLG. The chain is Guided entry of tail-anchored proteins factor 1 from Mus musculus (Mouse).